The sequence spans 606 residues: MDSQRELAEELRLYQSTLLQDGLKDLLDEKKFIDCTLKAGDKSLPCHRLILSACSPYFREYFLSEIDEAKKKEVVLDNVDPAILDLIIKYLYSASIDLNDGNVQDIFALASRFQIPSVFTVCVSYLQKRLAPGNCLAILRLGLLLDCPRLAISAREFVSDRFVQICKEEDFMQLSPQELISVISNDSLNVEKEEAVFEAVMKWVRTDKENRVKNLSEVFDCIRFRLMTEKYFKDHVEKDDIIKSNPDLQKKIKVLKDAFAGKLPEPSKNAAKTGAGEVNGDVGDEDLLPGYLNDIPRHGMFVKDLILLVNDTAAVAYDPTENECYLTALAEQIPRNHSSIVTQQNQIYVVGGLYVDEENKDQPLQSYFFQLDSIASEWVGLPPLPSARCLFGLGEVDDKIYVVAGKDLQTEASLDSVLCYDPVAAKWNEVKKLPIKVYGHNVISHKGMIYCLGGKTDDKKCTNRVFIFNPKKGDWKDLAPMKIPRSMFGVAVHKGKIVIAGGVTEDGLSASVEAFDLTTNKWDVMTEFPQERSSISLVSLAGSLYAIGGFAMIQLESKEFAPTEVNDIWKYEDDKKEWAGMLKEIRYASGASCLATRLNLFKLSKL.

Ser-3 bears the Phosphoserine mark. Residues 33–100 (IDCTLKAGDK…LYSASIDLND (68 aa)) enclose the BTB domain. Positions 135–237 (CLAILRLGLL…TEKYFKDHVE (103 aa)) constitute a BACK domain. Kelch repeat units lie at residues 346-398 (QIYV…EVDD), 399-447 (KIYV…SHKG), 448-495 (MIYC…VHKG), 497-542 (IVIA…SLAG), and 544-599 (LYAI…TRLN).

As to quaternary structure, interacts with NRAP. Interacts with LASP1. Part of a complex that contains CUL3, RBX1 and KLHL41. Post-translationally, ubiquitinated by E3 ubiquitin ligase complex formed by CUL3 and RBX1 and probably targeted for proteasome-independent degradation. Quinone-induced oxidative stress increases its ubiquitination. In terms of tissue distribution, sarcomeric muscle.

Its subcellular location is the cytoplasm. The protein resides in the cytoskeleton. The protein localises to the cell projection. It is found in the pseudopodium. It localises to the ruffle. Its subcellular location is the myofibril. The protein resides in the sarcomere. The protein localises to the m line. It is found in the sarcoplasmic reticulum membrane. It localises to the endoplasmic reticulum membrane. Functionally, involved in skeletal muscle development and differentiation. Regulates proliferation and differentiation of myoblasts and plays a role in myofibril assembly by promoting lateral fusion of adjacent thin fibrils into mature, wide myofibrils. Required for pseudopod elongation in transformed cells. This is Kelch-like protein 41 (KLHL41) from Homo sapiens (Human).